Here is a 60-residue protein sequence, read N- to C-terminus: Large ribosomal subunit protein uL30 (60 aa).

Belongs to the universal ribosomal protein uL30 family. As to quaternary structure, part of the 50S ribosomal subunit.

The chain is Large ribosomal subunit protein uL30 from Sphingopyxis alaskensis (strain DSM 13593 / LMG 18877 / RB2256) (Sphingomonas alaskensis).